Consider the following 224-residue polypeptide: 7-cyano-7-deazaguanine synthase (224 aa).

Position 9-19 (9-19 (LSGGLDSATAL)) interacts with ATP. The Zn(2+) site is built by cysteine 188, cysteine 198, cysteine 201, and cysteine 204.

The protein belongs to the QueC family. Zn(2+) serves as cofactor.

The catalysed reaction is 7-carboxy-7-deazaguanine + NH4(+) + ATP = 7-cyano-7-deazaguanine + ADP + phosphate + H2O + H(+). The protein operates within purine metabolism; 7-cyano-7-deazaguanine biosynthesis. Catalyzes the ATP-dependent conversion of 7-carboxy-7-deazaguanine (CDG) to 7-cyano-7-deazaguanine (preQ(0)). The polypeptide is 7-cyano-7-deazaguanine synthase (Thiobacillus denitrificans (strain ATCC 25259 / T1)).